Reading from the N-terminus, the 156-residue chain is Tripartite terminase subunit 2 (156 aa).

Positions 1–37 are disordered; it reads MYESENASEHHPELEDVFSENTGDSNPSMGSSDSTRS. Over residues 19 to 37 the composition is skewed to polar residues; the sequence is SENTGDSNPSMGSSDSTRS.

This sequence belongs to the herpesviridae TRM2 protein family. In terms of assembly, associates with TRM1 and TRM3 to form the tripartite terminase complex.

It is found in the host nucleus. Its function is as follows. Component of the molecular motor that translocates viral genomic DNA in empty capsid during DNA packaging. Forms a tripartite terminase complex together with TRM1 and TRM3 in the host cytoplasm. Once the complex reaches the host nucleus, it interacts with the capsid portal vertex. This portal forms a ring in which genomic DNA is translocated into the capsid. The polypeptide is Tripartite terminase subunit 2 (Varicella-zoster virus (strain Dumas) (HHV-3)).